A 289-amino-acid chain; its full sequence is ATP synthase subunit a (289 aa).

The next 6 helical transmembrane spans lie at 43–63, 104–124, 160–180, 193–213, 232–252, and 259–279; these read AFHL…VLIF, IAPL…VDLI, LSVF…GGFI, IFVQ…TLIA, VFIL…GLGV, and AVFH…LTIV.

The protein belongs to the ATPase A chain family. As to quaternary structure, F-type ATPases have 2 components, CF(1) - the catalytic core - and CF(0) - the membrane proton channel. CF(1) has five subunits: alpha(3), beta(3), gamma(1), delta(1), epsilon(1). CF(0) has three main subunits: a(1), b(2) and c(9-12). The alpha and beta chains form an alternating ring which encloses part of the gamma chain. CF(1) is attached to CF(0) by a central stalk formed by the gamma and epsilon chains, while a peripheral stalk is formed by the delta and b chains.

The protein localises to the cell inner membrane. Key component of the proton channel; it plays a direct role in the translocation of protons across the membrane. The protein is ATP synthase subunit a of Pseudomonas fluorescens (strain SBW25).